A 200-amino-acid chain; its full sequence is Methylamine utilization protein MauD (200 aa).

A helical membrane pass occupies residues 4–24 (FLIASNILLWLAFLGVTVVML). In terms of domain architecture, Thioredoxin spans 49–183 (PDIGDAAPEF…LESLLEADRT (135 aa)).

It localises to the membrane. Its pathway is one-carbon metabolism; methylamine degradation. In terms of biological role, may be specifically involved in the processing, transport, and/or maturation of the MADH beta-subunit. In Paracoccus denitrificans, this protein is Methylamine utilization protein MauD (mauD).